Reading from the N-terminus, the 97-residue chain is Co-chaperonin GroES (97 aa).

Belongs to the GroES chaperonin family. In terms of assembly, heptamer of 7 subunits arranged in a ring. Interacts with the chaperonin GroEL.

Its subcellular location is the cytoplasm. In terms of biological role, together with the chaperonin GroEL, plays an essential role in assisting protein folding. The GroEL-GroES system forms a nano-cage that allows encapsulation of the non-native substrate proteins and provides a physical environment optimized to promote and accelerate protein folding. GroES binds to the apical surface of the GroEL ring, thereby capping the opening of the GroEL channel. This Proteus mirabilis (strain HI4320) protein is Co-chaperonin GroES.